The chain runs to 193 residues: dITP/XTP pyrophosphatase (193 aa).

7–12 (SENENK) lines the substrate pocket. Asp-65 serves as the catalytic Proton acceptor. A Mg(2+)-binding site is contributed by Asp-65. Substrate is bound by residues Ser-66, 144–147 (FGYD), Lys-167, and 172–173 (HR).

The protein belongs to the HAM1 NTPase family. In terms of assembly, homodimer. Mg(2+) serves as cofactor.

The enzyme catalyses XTP + H2O = XMP + diphosphate + H(+). The catalysed reaction is dITP + H2O = dIMP + diphosphate + H(+). It catalyses the reaction ITP + H2O = IMP + diphosphate + H(+). Its function is as follows. Pyrophosphatase that catalyzes the hydrolysis of nucleoside triphosphates to their monophosphate derivatives, with a high preference for the non-canonical purine nucleotides XTP (xanthosine triphosphate), dITP (deoxyinosine triphosphate) and ITP. Seems to function as a house-cleaning enzyme that removes non-canonical purine nucleotides from the nucleotide pool, thus preventing their incorporation into DNA/RNA and avoiding chromosomal lesions. This is dITP/XTP pyrophosphatase from Tropheryma whipplei (strain Twist) (Whipple's bacillus).